The primary structure comprises 140 residues: UPF0654 protein C22G7.11c (140 aa).

Disordered stretches follow at residues 1–88 (MPDP…DPMK) and 110–140 (YKAT…ETQA). Positions 24-33 (AKERAEDYIE) are enriched in basic and acidic residues. Residues 34-44 (SHSSGQETGDY) show a composition bias toward polar residues. Acidic residues predominate over residues 54 to 71 (DYEDLGDYDEDADFDNEE).

Belongs to the UPF0654 (con-6) family.

The sequence is that of UPF0654 protein C22G7.11c from Schizosaccharomyces pombe (strain 972 / ATCC 24843) (Fission yeast).